The sequence spans 680 residues: Viral IRF2-like protein (680 aa).

Residues 7-103 (SEWLTDFIID…RPFTIYKGKM (97 aa)) constitute a DNA-binding region (IRF tryptophan pentad repeat). 4 disordered regions span residues 156 to 201 (SLRK…SENE), 220 to 257 (EEPEPSGFGSSGQSSSLLAPDSPRPSTSQVQGPLHVHT), 343 to 365 (ETASPQGPMQSEGGEEGSTESVS), and 403 to 423 (ASPQGPMQSEGGEEGSTESVS). The segment covering 168-188 (KQAAAVATPTTSSAAEVSSRS) has biased composition (low complexity). The segment covering 191–200 (EDTESSDSEN) has biased composition (acidic residues). Residues 220-240 (EEPEPSGFGSSGQSSSLLAPD) are compositionally biased toward low complexity.

This sequence belongs to the IRF family. In terms of assembly, interacts with host EIF2AK2/PKR. Interacts with host USP7.

It localises to the host nucleus. The protein localises to the host cytoplasm. DNA-binding transcription factor that plays a role in the modulation of host immune response. Acts by interacting with host EIF2AK2/PKR and inhibiting its activation. In turn, EIF2AK2/PKR substrates including EIF2S1 or histone H2A are not phosphorylated. Inhibits type I interferon signaling by targeting host IRF3 during viral reactivation from latency. Attenuates the transcriptional activity of host FOXO3 via activation of the AKT1 signaling pathway, inhibiting FOXO3-mediated apoptosis. Also suppresses the expression of viral early lytic genes in both newly infected and reactivated infected host cells allowing regulation of viral life cycle by harnessing the interferon pathway. Mechanistically, promotes host PML bodies formation as well as host antiviral restriction factors IFIT1-3 expression leading to inhibition of viral early lytic proteins. Also regulates host TRAF3 and TRAF6 ubiquitination by interacting with USP7 deubiquitinase thereby influencing TRAF3/6-mediated signal transduction. The protein is Viral IRF2-like protein (vIRF-2) of Human herpesvirus 8 type P (isolate GK18) (HHV-8).